The sequence spans 345 residues: Methylthioribose-1-phosphate isomerase 2 (345 aa).

Residues 47-49 (RGA), Arg-88, and Gln-194 each bind substrate. Catalysis depends on Asp-235, which acts as the Proton donor. 245–246 (NK) lines the substrate pocket.

It belongs to the eIF-2B alpha/beta/delta subunits family. MtnA subfamily.

It catalyses the reaction 5-(methylsulfanyl)-alpha-D-ribose 1-phosphate = 5-(methylsulfanyl)-D-ribulose 1-phosphate. The protein operates within amino-acid biosynthesis; L-methionine biosynthesis via salvage pathway; L-methionine from S-methyl-5-thio-alpha-D-ribose 1-phosphate: step 1/6. Its function is as follows. Catalyzes the interconversion of methylthioribose-1-phosphate (MTR-1-P) into methylthioribulose-1-phosphate (MTRu-1-P). This Pseudothermotoga lettingae (strain ATCC BAA-301 / DSM 14385 / NBRC 107922 / TMO) (Thermotoga lettingae) protein is Methylthioribose-1-phosphate isomerase 2.